The chain runs to 137 residues: Proofreading thioesterase EntH (137 aa).

Glu63 functions as the Nucleophile or proton acceptor in the catalytic mechanism.

The protein belongs to the thioesterase PaaI family. Homotetramer. Dimer of dimers. Interacts specifically with the aryl carrier protein (ArCP) domain of EntB.

It is found in the cytoplasm. It functions in the pathway siderophore biosynthesis; enterobactin biosynthesis. Functionally, required for optimal enterobactin synthesis. Acts as a proofreading enzyme that prevents EntB misacylation by hydrolyzing the thioester bound existing between EntB and wrongly charged molecules. The polypeptide is Proofreading thioesterase EntH (Salmonella typhimurium (strain LT2 / SGSC1412 / ATCC 700720)).